The sequence spans 525 residues: GMP synthase [glutamine-hydrolyzing] (525 aa).

The 199-residue stretch at 9–207 folds into the Glutamine amidotransferase type-1 domain; that stretch reads RILILDFGSQ…VRDICQCEAL (199 aa). The active-site Nucleophile is C86. Catalysis depends on residues H181 and E183. The 193-residue stretch at 208–400 folds into the GMPS ATP-PPase domain; that stretch reads WTPAKIIDDA…LGLPYDMLYR (193 aa). 235-241 is an ATP binding site; the sequence is SGGVDSS.

Homodimer.

The enzyme catalyses XMP + L-glutamine + ATP + H2O = GMP + L-glutamate + AMP + diphosphate + 2 H(+). The protein operates within purine metabolism; GMP biosynthesis; GMP from XMP (L-Gln route): step 1/1. In terms of biological role, catalyzes the synthesis of GMP from XMP. The polypeptide is GMP synthase [glutamine-hydrolyzing] (Citrobacter koseri (strain ATCC BAA-895 / CDC 4225-83 / SGSC4696)).